We begin with the raw amino-acid sequence, 179 residues long: Large ribosomal subunit protein uL5 (179 aa).

This sequence belongs to the universal ribosomal protein uL5 family. Part of the 50S ribosomal subunit; part of the 5S rRNA/L5/L18/L25 subcomplex. Contacts the 5S rRNA and the P site tRNA. Forms a bridge to the 30S subunit in the 70S ribosome.

Functionally, this is one of the proteins that bind and probably mediate the attachment of the 5S RNA into the large ribosomal subunit, where it forms part of the central protuberance. In the 70S ribosome it contacts protein S13 of the 30S subunit (bridge B1b), connecting the 2 subunits; this bridge is implicated in subunit movement. Contacts the P site tRNA; the 5S rRNA and some of its associated proteins might help stabilize positioning of ribosome-bound tRNAs. This chain is Large ribosomal subunit protein uL5, found in Salmonella arizonae (strain ATCC BAA-731 / CDC346-86 / RSK2980).